The primary structure comprises 316 residues: tRNA dimethylallyltransferase (316 aa).

17-24 contacts ATP; the sequence is GPTASGKT. Residue 19 to 24 participates in substrate binding; sequence TASGKT. Interaction with substrate tRNA stretches follow at residues 42-45, 166-170, and 247-252; these read DSAL, QRLSR, and RCVGYR.

This sequence belongs to the IPP transferase family. Monomer. Mg(2+) serves as cofactor.

The enzyme catalyses adenosine(37) in tRNA + dimethylallyl diphosphate = N(6)-dimethylallyladenosine(37) in tRNA + diphosphate. Functionally, catalyzes the transfer of a dimethylallyl group onto the adenine at position 37 in tRNAs that read codons beginning with uridine, leading to the formation of N6-(dimethylallyl)adenosine (i(6)A). In Salmonella paratyphi C (strain RKS4594), this protein is tRNA dimethylallyltransferase.